A 131-amino-acid polypeptide reads, in one-letter code: uncharacterized protein (131 aa).

Positions 99 to 131 (NAIQEEEIDMEQQEEKEEKPREKGKKKSVEEEF) are disordered. A compositionally biased stretch (acidic residues) spans 102–113 (QEEEIDMEQQEE). Over residues 114 to 131 (KEEKPREKGKKKSVEEEF) the composition is skewed to basic and acidic residues.

This is an uncharacterized protein from Sulfolobus islandicus rod-shaped virus 1 (SIRV-1).